A 95-amino-acid chain; its full sequence is EFGILEDGETIFVYVNGQMLGSSKTMPTGKERLLDISHFYFGGDNGEEKGNRHVKVRNVLLYNRVLSASELQCRLPEEVVQKPQSASPTYLKARI.

It belongs to the receptors of complement activation (RCA) family.

Its function is as follows. Interferes with the efficient assembly of the host C3 convertase. Could protect parasites from complement-mediated lysis by sera from a number of different species. This is Trypomastigote decay-accelerating factor from Trypanosoma cruzi.